The primary structure comprises 453 residues: Adenosylmethionine-8-amino-7-oxononanoate aminotransferase (453 aa).

118-119 is a binding site for pyridoxal 5'-phosphate; that stretch reads GA. Tyr-151 contacts substrate. Residue Asp-257 coordinates pyridoxal 5'-phosphate. 3 residues coordinate substrate: Lys-286, Gly-321, and Arg-416. An N6-(pyridoxal phosphate)lysine modification is found at Lys-286.

It belongs to the class-III pyridoxal-phosphate-dependent aminotransferase family. BioA subfamily. Homodimer. Pyridoxal 5'-phosphate serves as cofactor.

It localises to the cytoplasm. The catalysed reaction is (8S)-8-amino-7-oxononanoate + S-adenosyl-L-methionine = S-adenosyl-4-methylsulfanyl-2-oxobutanoate + (7R,8S)-7,8-diammoniononanoate. The protein operates within cofactor biosynthesis; biotin biosynthesis; 7,8-diaminononanoate from 8-amino-7-oxononanoate (SAM route): step 1/1. In terms of biological role, catalyzes the transfer of the alpha-amino group from S-adenosyl-L-methionine (SAM) to 7-keto-8-aminopelargonic acid (KAPA) to form 7,8-diaminopelargonic acid (DAPA). It is the only aminotransferase known to utilize SAM as an amino donor. This chain is Adenosylmethionine-8-amino-7-oxononanoate aminotransferase, found in Aquifex aeolicus (strain VF5).